The chain runs to 172 residues: Adenine phosphoribosyltransferase (172 aa).

This sequence belongs to the purine/pyrimidine phosphoribosyltransferase family. In terms of assembly, homodimer.

Its subcellular location is the cytoplasm. It carries out the reaction AMP + diphosphate = 5-phospho-alpha-D-ribose 1-diphosphate + adenine. The protein operates within purine metabolism; AMP biosynthesis via salvage pathway; AMP from adenine: step 1/1. Catalyzes a salvage reaction resulting in the formation of AMP, that is energically less costly than de novo synthesis. The protein is Adenine phosphoribosyltransferase of Herpetosiphon aurantiacus (strain ATCC 23779 / DSM 785 / 114-95).